Consider the following 129-residue polypeptide: Small ribosomal subunit protein uS9 (129 aa).

Belongs to the universal ribosomal protein uS9 family.

The protein is Small ribosomal subunit protein uS9 of Chlorobium phaeobacteroides (strain DSM 266 / SMG 266 / 2430).